The primary structure comprises 459 residues: Cyclooctatin synthase (459 aa).

Position 408 (C408) interacts with heme.

This sequence belongs to the cytochrome P450 family. It depends on heme as a cofactor.

It carries out the reaction cyclooctat-9-ene-5,7-diol + AH2 + O2 = cyclooctatin + A + H2O. In terms of biological role, involved in the biosynthesis of cyclooctatin, a potent inhibitor of lysophospholipase. Catalyzes the hydroxylation of cyclooctat-9-ene-5,7-diol at C-18 to yield the final product, cyclooctatin. The polypeptide is Cyclooctatin synthase (Streptomyces melanosporofaciens).